We begin with the raw amino-acid sequence, 697 residues long: MAKDLTNYRNFGIFAHVDAGKTTTTERILKLTGKIHKIGEVHEGAATTDFMEQEQERGITIQSAATSCFWKDHQLNIIDTPGHVDFTIEVYRSLKVLDGGVGVFCGSGGVEPQSETNWRYANDSKVARIIYVNKLDRTGADFYKVVKQVKDVLAAEPLVMVLPIGIENDFVGVVDLLTRKAWVWDDSGDPTKYEIKDVPENMTDDVEKYREMLVETAIEQDDEVMEKYLEGEEPDLDTLKRCIRKGTKDLVFFPTYCGSSFKNKGVQLVLDAVVDFLPNPTEIKPQPEIDLEGNETGKFAYVDPEKPLRALAFKIMDDKYGALTFTRIYSGTLSKGDTVLNTFTGKTERIGRLVEMHADSREEIESAQAGDIVAIVGMKNVQTGHTLCDPKEPATLEPMVFPDPVISIAVAAKDKGSVEKLGMALSKMVQEDPSFRVETDAESNETIIKGMGELHLDIKVDILKRTYGVDVEVGKPQVAYRESITKRLEDSYTHKKQSGGSGQFAKIDYMIEPGEVGTGFDFQSKVTGGNVPREFWPAVQKGFETSFEKGMLAGYPCVDMKFTLMDGAFHPVDSSAIAFEIAAKAAYRQSFSKAAPQLLEPIMKVDVFTPDDHVGDVIGDLNRRRGMIKSQDSAATGSRIKADVPLSEMFGYIGDLRTMTSGRGQFSMEFSHYAPCPANVAEVVIKEAKERQEAKSK.

Positions 6-281 (TNYRNFGIFA…AVVDFLPNPT (276 aa)) constitute a tr-type G domain. GTP is bound by residues 15-22 (AHVDAGKT), 79-83 (DTPGH), and 133-136 (NKLD).

This sequence belongs to the TRAFAC class translation factor GTPase superfamily. Classic translation factor GTPase family. EF-G/EF-2 subfamily.

The protein resides in the cytoplasm. In terms of biological role, catalyzes the GTP-dependent ribosomal translocation step during translation elongation. During this step, the ribosome changes from the pre-translocational (PRE) to the post-translocational (POST) state as the newly formed A-site-bound peptidyl-tRNA and P-site-bound deacylated tRNA move to the P and E sites, respectively. Catalyzes the coordinated movement of the two tRNA molecules, the mRNA and conformational changes in the ribosome. The protein is Elongation factor G 2 of Trichodesmium erythraeum (strain IMS101).